We begin with the raw amino-acid sequence, 463 residues long: Glutamate--tRNA ligase 1 (463 aa).

The 'HIGH' region signature appears at 10 to 20 (PSPTGYLHIGG). A 'KMSKS' region motif is present at residues 238–242 (KLSKR). Position 241 (Lys-241) interacts with ATP.

It belongs to the class-I aminoacyl-tRNA synthetase family. Glutamate--tRNA ligase type 1 subfamily. As to quaternary structure, monomer.

Its subcellular location is the cytoplasm. The enzyme catalyses tRNA(Glu) + L-glutamate + ATP = L-glutamyl-tRNA(Glu) + AMP + diphosphate. Catalyzes the attachment of glutamate to tRNA(Glu) in a two-step reaction: glutamate is first activated by ATP to form Glu-AMP and then transferred to the acceptor end of tRNA(Glu). This is Glutamate--tRNA ligase 1 from Helicobacter pylori (strain G27).